Consider the following 527-residue polypeptide: F-box protein SKIP2 (527 aa).

The region spanning 39-85 is the F-box domain; the sequence is DRDFTGDLPDECLAHVFQFLGAGDRKRCSLVCKRWLLVDGQSRHRLS.

In terms of assembly, part of a SCF (ASK-cullin-F-box) protein ligase complex. Interacts with SKP1A/ASK1, SKP1B/ASK2 and ASK11.

Its subcellular location is the nucleus. The protein operates within protein modification; protein ubiquitination. Component of SCF(ASK-cullin-F-box) E3 ubiquitin ligase complexes, which may mediate the ubiquitination and subsequent proteasomal degradation of target proteins. The sequence is that of F-box protein SKIP2 (SKIP2) from Arabidopsis thaliana (Mouse-ear cress).